The sequence spans 331 residues: UDP-galactose/UDP-glucose transporter 3 (331 aa).

A run of 8 helical transmembrane segments spans residues 11–31 (VLLLSFCVAGIWAAYIYQGIL), 49–69 (HLAFLNLAQNVICLVWSYIMI), 80–100 (APWWTYWSAGITNTIGPAMGI), 112–132 (VLAKSSKMIPVMLMGSLVYGI), 135–155 (TLPEYLCTFLVAGGVSMFALL), 170–190 (APLGYGLCFLNLAFDGFTNAT), 206–226 (IMLGMNLWGTIYNMVYMFGLP), and 245–265 (WDILMYCLCGAVGQNFIFLTI). Residues 327-331 (KKKKA) carry the Di-lysine motif motif.

This sequence belongs to the nucleotide-sugar transporter family. UDP-galactose:UMP antiporter (TC 2.A.7.11) subfamily. In terms of tissue distribution, mostly expressed in flowers, and, to a lower extent, in roots, stems and leaves.

It localises to the endoplasmic reticulum membrane. The protein resides in the golgi apparatus membrane. Its function is as follows. Essential sugar transporter required for the transport of UDP-glucose from the cytoplasm into the Golgi and the endoplasmic reticulum. Essential for pollen development and involved in embryo sac progress. The polypeptide is UDP-galactose/UDP-glucose transporter 3 (Arabidopsis thaliana (Mouse-ear cress)).